We begin with the raw amino-acid sequence, 360 residues long: Peptide chain release factor 1 (360 aa).

N5-methylglutamine is present on Q236.

It belongs to the prokaryotic/mitochondrial release factor family. In terms of processing, methylated by PrmC. Methylation increases the termination efficiency of RF1.

The protein localises to the cytoplasm. Functionally, peptide chain release factor 1 directs the termination of translation in response to the peptide chain termination codons UAG and UAA. The polypeptide is Peptide chain release factor 1 (Lactiplantibacillus plantarum (strain ATCC BAA-793 / NCIMB 8826 / WCFS1) (Lactobacillus plantarum)).